The following is a 1183-amino-acid chain: Spermatogenesis-associated protein 31G1 (1183 aa).

6 disordered regions span residues 109-153 (TPIG…FPTF), 469-555 (LMPA…SPWA), 661-686 (TVDD…SSEP), 843-884 (ASQG…VSEV), 973-1032 (CLHS…TGLL), and 1048-1087 (QKRG…PAEA). Residues 124 to 134 (CRSEGRPRATE) show a composition bias toward basic and acidic residues. The span at 135–153 (TQEQVLIQSPSPSRSFPTF) shows a compositional bias: polar residues. Basic and acidic residues predominate over residues 487-509 (NPKERLSAPKDVRENLGYREHPH). Over residues 671–685 (TGKNTDNTKKCSSSE) the composition is skewed to polar residues. Pro residues predominate over residues 847–858 (PNPPAVNPPQPT). Residues 975–984 (HSSSQPQAQA) show a composition bias toward polar residues. The segment covering 993–1002 (QKSKRLKRKA) has biased composition (basic residues). Positions 1069–1079 (SPTNTRENNPA) are enriched in polar residues.

In terms of tissue distribution, expressed in kidney and testis. Expressed at lower levels in stomach, intestine, epididymis and ovary. Expressed at very low levels in heart and spleen.

Dispensable for normal development and fertility. In Mus musculus (Mouse), this protein is Spermatogenesis-associated protein 31G1 (Spata31g1).